Here is a 242-residue protein sequence, read N- to C-terminus: MVEYYDVLGVQRNASPEDIKKAYRKLALKWHPDKNPDNKDEAERRFKEVAEAYEVLSDSKKRDIYDKYGKEGLTGGGGGSHFDNPYEFGFTFRSPDDVFRDFFGGRDPFSFDLFADDPFDDFFGRRGHRANRSRPGGSFLSTFGGFPAFGPTFSPFDSGFSSSFGSFGGHGGFSSFSSSSFGGSGMGNFRSVSTSTKVVNGRRVTTKRIVENGQERIEVEEDGQLKSLTINGKEQLLRLDNK.

A J domain is found at 3 to 69; sequence EYYDVLGVQR…KKRDIYDKYG (67 aa).

Homooligomer.

The protein localises to the cytoplasm. Its subcellular location is the perinuclear region. It is found in the nucleus. Has a stimulatory effect on the ATPase activity of HSP70 in a dose-dependent and time-dependent manner and hence acts as a co-chaperone of HSP70. Plays an indispensable role in the organization of KRT8/KRT18 filaments. Acts as an endogenous molecular chaperone for neuronal proteins including huntingtin. Suppresses aggregation and toxicity of polyglutamine-containing, aggregation-prone proteins. Also reduces cellular toxicity and caspase-3 activity. The chain is DnaJ homolog subfamily B member 6 from Xenopus tropicalis (Western clawed frog).